The primary structure comprises 439 residues: MPEYEIQVPSYRAAALTAEERTRLLARPIQNTQKIRTIVQPIIEDVKSRGEASLIDYASKFEKVQLKSAVLKAPFDDDLMKISPMIKEDIDIAFNNIFAFHSSQLRPTIAVQTMRGVVCQRMSRPINRVGLYIPGGTAVLPSTALMLGVPAKVAGCPHVVISTPVRKDGTVAPEIVYIANKIGAEAIILAGGAQAIAAMAYGISGVPKVNKIFGPGNQFVTAAKMHVQNDYGALVAIDLPAGPSEVLVIADETCNPESVALDLLSQAEHGLDSQIILLTVSLSPEMFDRIQKAINDHALRLSRSYIIKHAIKKSVIVQVDNVDQAFEWSNLYGPEHLVLHLKNASSYIPKIDNAGSVFVGPWSPVSMGDYASGTNHTLPTYGYASSYSGVSTDSFLKYITTQELTEEGIQRLGPTVIRLAELEGLTAHADAVRVRGVRL.

The NAD(+) site is built by Tyr-132, Gln-194, and Asn-217. 3 residues coordinate substrate: Ser-244, Gln-266, and His-269. Positions 266 and 269 each coordinate Zn(2+). Active-site proton acceptor residues include Glu-335 and His-336. 4 residues coordinate substrate: His-336, Asp-369, Glu-423, and His-428. Asp-369 is a Zn(2+) binding site. His-428 provides a ligand contact to Zn(2+).

Belongs to the histidinol dehydrogenase family. The cofactor is Zn(2+).

The enzyme catalyses L-histidinol + 2 NAD(+) + H2O = L-histidine + 2 NADH + 3 H(+). Its pathway is amino-acid biosynthesis; L-histidine biosynthesis; L-histidine from 5-phospho-alpha-D-ribose 1-diphosphate: step 9/9. Its function is as follows. Catalyzes the sequential NAD-dependent oxidations of L-histidinol to L-histidinaldehyde and then to L-histidine. The sequence is that of Histidinol dehydrogenase (his2) from Schizosaccharomyces pombe (strain 972 / ATCC 24843) (Fission yeast).